Reading from the N-terminus, the 323-residue chain is ADP-L-glycero-D-manno-heptose-6-epimerase (323 aa).

Residues 10–11 (FI), 31–32 (DN), K38, R53, 75–79 (MGACS), and N92 each bind NADP(+). Y143 (proton acceptor) is an active-site residue. Residue K147 participates in NADP(+) binding. N170 contributes to the substrate binding site. Positions 171 and 179 each coordinate NADP(+). K179 functions as the Proton acceptor in the catalytic mechanism. Substrate is bound by residues D181, K188, 202–205 (FRSC), R216, and Y281.

This sequence belongs to the NAD(P)-dependent epimerase/dehydratase family. HldD subfamily. In terms of assembly, homopentamer. It depends on NADP(+) as a cofactor.

It carries out the reaction ADP-D-glycero-beta-D-manno-heptose = ADP-L-glycero-beta-D-manno-heptose. The protein operates within nucleotide-sugar biosynthesis; ADP-L-glycero-beta-D-manno-heptose biosynthesis; ADP-L-glycero-beta-D-manno-heptose from D-glycero-beta-D-manno-heptose 7-phosphate: step 4/4. Catalyzes the interconversion between ADP-D-glycero-beta-D-manno-heptose and ADP-L-glycero-beta-D-manno-heptose via an epimerization at carbon 6 of the heptose. This is ADP-L-glycero-D-manno-heptose-6-epimerase from Nitratidesulfovibrio vulgaris (strain ATCC 29579 / DSM 644 / CCUG 34227 / NCIMB 8303 / VKM B-1760 / Hildenborough) (Desulfovibrio vulgaris).